Here is a 145-residue protein sequence, read N- to C-terminus: D-aminoacyl-tRNA deacylase (145 aa).

The Gly-cisPro motif, important for rejection of L-amino acids signature appears at 137–138 (GP).

This sequence belongs to the DTD family. Homodimer.

The protein resides in the cytoplasm. The enzyme catalyses glycyl-tRNA(Ala) + H2O = tRNA(Ala) + glycine + H(+). The catalysed reaction is a D-aminoacyl-tRNA + H2O = a tRNA + a D-alpha-amino acid + H(+). In terms of biological role, an aminoacyl-tRNA editing enzyme that deacylates mischarged D-aminoacyl-tRNAs. Also deacylates mischarged glycyl-tRNA(Ala), protecting cells against glycine mischarging by AlaRS. Acts via tRNA-based rather than protein-based catalysis; rejects L-amino acids rather than detecting D-amino acids in the active site. By recycling D-aminoacyl-tRNA to D-amino acids and free tRNA molecules, this enzyme counteracts the toxicity associated with the formation of D-aminoacyl-tRNA entities in vivo and helps enforce protein L-homochirality. In Escherichia coli O139:H28 (strain E24377A / ETEC), this protein is D-aminoacyl-tRNA deacylase.